Here is a 100-residue protein sequence, read N- to C-terminus: Colipase-like protein 2 (100 aa).

An N-terminal signal peptide occupies residues 1–21; it reads MAAALALVAGVLSGAVLPLWS. 5 disulfide bridges follow: C34–C45, C40–C56, C44–C78, C66–C86, and C80–C97.

It belongs to the colipase family.

Its subcellular location is the secreted. The polypeptide is Colipase-like protein 2 (CLPSL2) (Homo sapiens (Human)).